A 115-amino-acid polypeptide reads, in one-letter code: Parathyroid hormone (115 aa).

The signal sequence occupies residues 1 to 25; that stretch reads MIPAKDMAKVMIVMLAICFLTKSDG. A propeptide spanning residues 26–31 is cleaved from the precursor; sequence KSVKKR. The important for receptor binding stretch occupies residues 51-69; sequence RVEWLRKKLQDVHNFIALG. The interval 72–96 is disordered; that stretch reads LAPRDAGSQRPRKKEDNILVESHEK. The segment covering 84–96 has biased composition (basic and acidic residues); the sequence is KKEDNILVESHEK.

The protein belongs to the parathyroid hormone family. As to quaternary structure, interacts with PTH1R (via N-terminal extracellular domain).

The protein localises to the secreted. In terms of biological role, parathyroid hormone elevates calcium level by dissolving the salts in bone and preventing their renal excretion. Acts by binding to its receptor, PTH1R, activating G protein-coupled receptor signaling. Stimulates [1-14C]-2-deoxy-D-glucose (2DG) transport and glycogen synthesis in osteoblastic cells. This Macaca fascicularis (Crab-eating macaque) protein is Parathyroid hormone (PTH).